The primary structure comprises 305 residues: tRNA dimethylallyltransferase (305 aa).

9-16 is a binding site for ATP; sequence GPTASGKS. 11–16 contacts substrate; sequence TASGKS. Residues 34 to 37 are interaction with substrate tRNA; sequence DSKQ.

This sequence belongs to the IPP transferase family. In terms of assembly, monomer. The cofactor is Mg(2+).

It catalyses the reaction adenosine(37) in tRNA + dimethylallyl diphosphate = N(6)-dimethylallyladenosine(37) in tRNA + diphosphate. In terms of biological role, catalyzes the transfer of a dimethylallyl group onto the adenine at position 37 in tRNAs that read codons beginning with uridine, leading to the formation of N6-(dimethylallyl)adenosine (i(6)A). This Anaplasma marginale (strain Florida) protein is tRNA dimethylallyltransferase.